A 658-amino-acid polypeptide reads, in one-letter code: Palmitoyltransferase ZDHHC5-B (658 aa).

At 1 to 24 the chain is on the cytoplasmic side; that stretch reads MPVGLSVGGALGDPSPSRPFRPSR. A helical membrane pass occupies residues 25–45; the sequence is YVPVSAATAFLVGATTLFLCF. Over 46–56 the chain is Extracellular; the sequence is TCPWLSEKFSS. The helical transmembrane segment at 57 to 77 threads the bilayer; the sequence is FIPLYNVVVFLFTLANFCMAT. The Cytoplasmic segment spans residues 78–159; the sequence is FMDPGVFPRA…NCIGRRNYRY (82 aa). One can recognise a DHHC domain in the interval 115–165; that stretch reads KWCSTCRFYRPPRCSHCSVCDNCVEEFDHHCPWVNNCIGRRNYRYFFLFLL. The active-site S-palmitoyl cysteine intermediate is C145. Residues 160 to 180 form a helical membrane-spanning segment; sequence FFLFLLSLTVHIMDVFGFSLL. Topologically, residues 181–202 are extracellular; the sequence is YILHHTKQLDLVQSGVTMAVMC. The helical transmembrane segment at 203–223 threads the bilayer; the sequence is VAGLFFVPVAGLTGFHVVLVA. Residues 224-658 are Cytoplasmic-facing; the sequence is RGRTTNEQVT…VGGTTYEISV (435 aa). Disordered regions lie at residues 306 to 419, 490 to 522, and 540 to 658; these read EIME…RSGS, ESLLTPSESPEFESAAHELSPPRPHPPHSLSTA, and QREG…EISV. Polar residues predominate over residues 360 to 398; sequence PGKNHTASTHSSKMSRGNSMTESPSVPVTTGQPSYRSDP. Gly residues predominate over residues 407–419; that stretch reads GCRGGAEGGRSGS. Pro residues predominate over residues 565-575; it reads SSPPSRAPPLS. Residues 619–633 are compositionally biased toward polar residues; that stretch reads SMPNSTIKQNVANHN. Positions 634-644 are enriched in basic residues; it reads THSHKPARGVK.

This sequence belongs to the DHHC palmitoyltransferase family. ERF2/ZDHHC9 subfamily.

It localises to the cell membrane. It carries out the reaction L-cysteinyl-[protein] + hexadecanoyl-CoA = S-hexadecanoyl-L-cysteinyl-[protein] + CoA. Its function is as follows. Palmitoyltransferase that catalyzes the addition of palmitate onto various protein substrates and is involved in a variety of cellular processes. The sequence is that of Palmitoyltransferase ZDHHC5-B from Danio rerio (Zebrafish).